Reading from the N-terminus, the 104-residue chain is Large ribosomal subunit protein uL24 (104 aa).

The protein belongs to the universal ribosomal protein uL24 family. As to quaternary structure, part of the 50S ribosomal subunit.

Its function is as follows. One of two assembly initiator proteins, it binds directly to the 5'-end of the 23S rRNA, where it nucleates assembly of the 50S subunit. In terms of biological role, one of the proteins that surrounds the polypeptide exit tunnel on the outside of the subunit. This is Large ribosomal subunit protein uL24 from Neorickettsia sennetsu (strain ATCC VR-367 / Miyayama) (Ehrlichia sennetsu).